Reading from the N-terminus, the 558-residue chain is Energy-dependent translational throttle protein EttA (558 aa).

ABC transporter domains are found at residues 6 to 256 (YTMK…AVQG) and 322 to 552 (VEVD…RVTH). ATP is bound at residue 38–45 (GPNGAGKS). Positions 94–136 (GDIKIKLDRFNEVAELMATDYTDELMEEMGRLQEELDHADAWD) are arm. Residues 239–320 (GNYSTYLEKK…IPVGPRLGNV (82 aa)) are ptIM. 354–361 (GPNGVGKT) provides a ligand contact to ATP.

This sequence belongs to the ABC transporter superfamily. ABCF family. Translational throttle EttA subfamily. Monomer. Probably contacts ribosomal proteins L1, L5, L33 and S7, the 16S and 23S rRNA and the P-site containing tRNA(fMet).

It is found in the cytoplasm. The enzyme catalyses ATP + H2O = ADP + phosphate + H(+). Its function is as follows. A translation factor that gates the progression of the 70S ribosomal initiation complex (IC, containing tRNA(fMet) in the P-site) into the translation elongation cycle by using a mechanism sensitive to the ATP/ADP ratio. Binds to the 70S ribosome E-site where it modulates the state of the translating ribosome during subunit translocation. ATP hydrolysis probably frees it from the ribosome, which can enter the elongation phase. This is Energy-dependent translational throttle protein EttA from Mycobacterium tuberculosis (strain CDC 1551 / Oshkosh).